Here is a 210-residue protein sequence, read N- to C-terminus: SAP domain-containing ribonucleoprotein (210 aa).

At A2 the chain carries N-acetylalanine. The SAP domain occupies 8 to 42 (LHKLKLAELKQECLARGLETKGIKQDLINRLQAYL). At K10 the chain carries N6-acetyllysine. The segment covering 45-64 (HAEEEANEEDVLGDETEEEE) has biased composition (acidic residues). The interval 45 to 87 (HAEEEANEEDVLGDETEEEEPKPIELPVKEEEPPEKAVDMASE) is disordered. The segment covering 65-87 (PKPIELPVKEEEPPEKAVDMASE) has biased composition (basic and acidic residues). K142 is modified (N6-acetyllysine). The disordered stretch occupies residues 162–210 (SSISRKSEDDEKLKKRKERFGIVTSSAGTGTTEDTEAKKRKRAERFGIA). S163 is modified (phosphoserine). The segment covering 184 to 193 (VTSSAGTGTT) has biased composition (polar residues).

It belongs to the SAP domain-containing ribonucleoprotein family. As to quaternary structure, interacts with DDX39A. Interacts with FUS. Interacts (via the C-terminal domain) with DDX39B; the interaction is direct and facilitates RNA binding of DDX39B. Component of the transcription/export (TREX) complex at least composed of ALYREF/THOC4, DDX39B, SARNP/CIP29, CHTOP and the THO subcomplex; TREX seems to have dynamic structure involving ATP-dependent remodeling; in the complex interacts directly with DDX39B in a ATP-dependent manner which bridges it to ALYREF/THOC4.

It is found in the nucleus. It localises to the nucleus speckle. Its function is as follows. Binds both single-stranded and double-stranded DNA with higher affinity for the single-stranded form. Specifically binds to scaffold/matrix attachment region DNA. Also binds single-stranded RNA. Enhances RNA unwinding activity of DDX39A. May participate in important transcriptional or translational control of cell growth, metabolism and carcinogenesis. Component of the TREX complex which is thought to couple mRNA transcription, processing and nuclear export, and specifically associates with spliced mRNA and not with unspliced pre-mRNA. The TREX complex is recruited to spliced mRNAs by a transcription-independent mechanism, binds to mRNA upstream of the exon-junction complex (EJC) and is recruited in a splicing- and cap-dependent manner to a region near the 5' end of the mRNA where it functions in mRNA export to the cytoplasm via the TAP/NXF1 pathway. Associates with DDX39B, which facilitates RNA binding of DDX39B and likely plays a role in mRNA export. This is SAP domain-containing ribonucleoprotein (Sarnp) from Mus musculus (Mouse).